The following is a 1312-amino-acid chain: Cyclic GMP-binding protein D (1312 aa).

The 130-residue stretch at 26–155 (GFSAIKSCSL…EFFKAKKMAR (130 aa)) folds into the N-terminal Ras-GEF domain. Low complexity-rich tracts occupy residues 206-236 (NTMNGINGTSNNNVNSNNNNNNGTTNISSPN) and 275-296 (NGTSPQSSPSSTLSSTNSLFNQ). Disordered regions lie at residues 206–244 (NTMNGINGTSNNNVNSNNNNNNGTTNISSPNFDPSRSSM) and 260–326 (NFNN…NNVN). Over residues 297-310 (QPSLSMLNDDGSVQ) the composition is skewed to polar residues. Residues 311 to 326 (NNNNNNNNNNNNNNVN) show a composition bias toward low complexity. Positions 353 to 582 (LPEAIAKELT…FRLSKIREET (230 aa)) constitute a Ras-GEF domain. Positions 586 to 658 (QSLKESNGIG…NCGNGSGISS (73 aa)) are disordered. Low complexity predominate over residues 591–612 (SNGIGNSNSTSGGSSSSLVNKD). Residues 613–625 (GSGGGGGSGGGGS) show a composition bias toward gly residues. Residues 630-644 (GDGKGDGKDNRDGRG) are compositionally biased toward basic and acidic residues. Low complexity predominate over residues 646–657 (GNSNCGNGSGIS). 698–857 (VSSTLSEREW…ATFYKFIGVI (160 aa)) serves as a coordination point for a nucleoside 3',5'-cyclic phosphate. In terms of domain architecture, GRAM spans 940-1006 (SSFRTKFGLS…DKILTVDKNI (67 aa)). The segment covering 1059 to 1087 (QQQQPSQQPSQQQSQSSQLQQSVSASSTT) has biased composition (low complexity). Disordered stretches follow at residues 1059–1108 (QQQQ…IKDL) and 1167–1210 (NNIN…NSSI). A nucleoside 3',5'-cyclic phosphate-binding positions include 1105–1218 (IKDL…SNTS) and 1182–1303 (NNNN…LACV).

In terms of biological role, promotes the exchange of Ras-bound GDP by GTP. Induces the formation of substrate-attached pseudopodia, that leads to increased adhesion and thereby negatively influencing cell speed and polarity. The polypeptide is Cyclic GMP-binding protein D (gbpD) (Dictyostelium discoideum (Social amoeba)).